Consider the following 153-residue polypeptide: Movement protein (153 aa).

Residues 107–153 (SSSARPLPQQPAPSLTSWTPIAKHLHSHQQSISSQSPKLVRGASQRR) form a disordered region.

This sequence belongs to the luteoviruses movement protein family.

Transports viral genome to neighboring plant cells directly through plasmosdesmata, without any budding. The movement protein allows efficient cell to cell propagation, by bypassing the host cell wall barrier. This chain is Movement protein, found in Avena byzantina (Oat).